The following is a 420-amino-acid chain: S-adenosylmethionine synthase (420 aa).

An ATP-binding site is contributed by H16. D18 lines the Mg(2+) pocket. E44 contacts K(+). Residues E57 and Q100 each contribute to the L-methionine site. Positions 100–110 (QSADIAQGVDK) are flexible loop. ATP contacts are provided by residues 175-177 (DGK), 251-252 (KF), D260, 266-267 (RK), A283, and K287. D260 lines the L-methionine pocket. K291 contacts L-methionine.

Belongs to the AdoMet synthase family. Homotetramer; dimer of dimers. Mg(2+) is required as a cofactor. The cofactor is K(+).

The protein localises to the cytoplasm. It carries out the reaction L-methionine + ATP + H2O = S-adenosyl-L-methionine + phosphate + diphosphate. Its pathway is amino-acid biosynthesis; S-adenosyl-L-methionine biosynthesis; S-adenosyl-L-methionine from L-methionine: step 1/1. Catalyzes the formation of S-adenosylmethionine (AdoMet) from methionine and ATP. The overall synthetic reaction is composed of two sequential steps, AdoMet formation and the subsequent tripolyphosphate hydrolysis which occurs prior to release of AdoMet from the enzyme. This chain is S-adenosylmethionine synthase, found in Trichodesmium erythraeum (strain IMS101).